The primary structure comprises 105 residues: Late embryogenesis abundant protein Lea5-A (105 aa).

It belongs to the LEA type 3 family.

The protein is Late embryogenesis abundant protein Lea5-A (LEA5-A) of Gossypium hirsutum (Upland cotton).